Here is a 713-residue protein sequence, read N- to C-terminus: DNA polymerase eta (713 aa).

Residues 9–259 (VALVDMDCFF…MPIRKIRSLG (251 aa)) form the UmuC domain. 2 residues coordinate Mg(2+): Asp13 and Met14. The Mn(2+) site is built by Asp13 and Met14. Position 61 (Arg61) interacts with a 2'-deoxyribonucleoside 5'-triphosphate. The Mg(2+) site is built by Asp115 and Glu116. Mn(2+)-binding residues include Asp115 and Glu116. 2 disordered regions span residues 441-472 (TSFLSSDPSSLPKVPVTSSEAKTQGSGPAVTA) and 495-527 (EASLSSLTAPTQAPMSNSPSKPSLPFQTSQSTG). Composition is skewed to polar residues over residues 456-466 (VTSSEAKTQGS) and 497-527 (SLSSLTAPTQAPMSNSPSKPSLPFQTSQSTG). The UBZ3-type zinc finger occupies 628-662 (AAEDQVPCEKCGSLVPVWDMPEHMDYHFALELQKS). Zn(2+) contacts are provided by Cys635, Cys638, His650, and His654. Positions 677-705 (VSHQGKRNPKSPLACTNKRPRPEGMQTLE) are disordered. Residues Lys682, Lys686, and Lys694 each participate in a glycyl lysine isopeptide (Lys-Gly) (interchain with G-Cter in ubiquitin) cross-link. The PIP-box signature appears at 701-708 (MQTLESFF). Lys709 participates in a covalent cross-link: Glycyl lysine isopeptide (Lys-Gly) (interchain with G-Cter in ubiquitin).

This sequence belongs to the DNA polymerase type-Y family. Interacts with REV1. Interacts with monoubiquitinated PCNA, but not unmodified PCNA. Interacts with POLI; this interaction targets POLI to the replication machinery. Interacts with PALB2 and BRCA2; the interactions are direct and are required to sustain the recruitment of POLH at blocked replication forks and to stimulate POLH-dependent DNA synthesis on D loop substrates. Interacts (via C-terminus) with TRAIP. Interacts with ubiquitin. Interacts with POLDIP2. The cofactor is Mg(2+). Mn(2+) serves as cofactor. Post-translationally, monoubiquitinated by RCHY1/PIRH2. Ubiquitination depends on integrity of the UBZ3-type zinc finger domain and is enhanced by TRAIP. Ubiquitination inhibits the ability of PolH to interact with PCNA and to bypass UV-induced lesions.

The protein localises to the nucleus. It catalyses the reaction DNA(n) + a 2'-deoxyribonucleoside 5'-triphosphate = DNA(n+1) + diphosphate. The enzyme in complex with the DNA substrate binds a third divalent metal cation. The binding of this third divalent cation, which is coordinated by water molecules and two oxygen atoms from DNA and dNTP, is essential for catalyzing the DNA synthesis. In terms of biological role, DNA polymerase specifically involved in the DNA repair by translesion synthesis (TLS). Due to low processivity on both damaged and normal DNA, cooperates with the heterotetrameric (REV3L, REV7, POLD2 and POLD3) POLZ complex for complete bypass of DNA lesions. Inserts one or 2 nucleotide(s) opposite the lesion, the primer is further extended by the tetrameric POLZ complex. In the case of 1,2-intrastrand d(GpG)-cisplatin cross-link, inserts dCTP opposite the 3' guanine. Particularly important for the repair of UV-induced pyrimidine dimers. Although inserts the correct base, may cause base transitions and transversions depending upon the context. May play a role in hypermutation at immunoglobulin genes. Forms a Schiff base with 5'-deoxyribose phosphate at abasic sites, but does not have any lyase activity, preventing the release of the 5'-deoxyribose phosphate (5'-dRP) residue. This covalent trapping of the enzyme by the 5'-dRP residue inhibits its DNA synthetic activity during base excision repair, thereby avoiding high incidence of mutagenesis. Targets POLI to replication foci. The sequence is that of DNA polymerase eta (POLH) from Homo sapiens (Human).